Consider the following 337-residue polypeptide: MSIARRTTLSKFLIEQQRETNNLPADLRLLIEVVARACKAISYNVSKGALGDALGTAGSENVQGEVQKKLDILSNEILLDANEWGGNLAAMASEEMETFFPIPANYPRGEYLLVFDPLDGSSNIDVNVSIGTIFSVLRCPDGKQATEESFLQPGTQQVAAGYAVYGPQTVFVLTTGNGVNCFTLDREVGSWVLTQSNMQIPADTREYAINASNARHWYDPVKRYVDELNAGKDGPRGDNFNMRWIASMVADVHRILNRGGIFMYPADKRTPDRPGKLRLMYEANPMAFIVEQAGGAATTGTQRIMEVQPTGLHQRVPVFLGSKNEVERVTAYHHESQ.

Glu-94, Asp-116, Leu-118, and Asp-119 together coordinate Mg(2+). Substrate contacts are provided by residues 119–122 (DGSS), Asn-210, and Lys-276. Mg(2+) is bound at residue Glu-282.

It belongs to the FBPase class 1 family. As to quaternary structure, homotetramer. The cofactor is Mg(2+).

It localises to the cytoplasm. The enzyme catalyses beta-D-fructose 1,6-bisphosphate + H2O = beta-D-fructose 6-phosphate + phosphate. The protein operates within carbohydrate biosynthesis; gluconeogenesis. The sequence is that of Fructose-1,6-bisphosphatase class 1 from Burkholderia multivorans (strain ATCC 17616 / 249).